The chain runs to 245 residues: Carbohydrate deacetylase (245 aa).

Mg(2+) is bound by residues H59 and H121.

This sequence belongs to the YdjC deacetylase family. Homodimer. Mg(2+) serves as cofactor.

In terms of biological role, probably catalyzes the deacetylation of acetylated carbohydrates an important step in the degradation of oligosaccharides. The chain is Carbohydrate deacetylase from Clostridium beijerinckii (strain ATCC 51743 / NCIMB 8052) (Clostridium acetobutylicum).